Reading from the N-terminus, the 303-residue chain is Pycsar effector protein XpPycTIR (303 aa).

14–138 (LVATLTEHRL…RRIAATLARR (125 aa)) serves as a coordination point for a nucleoside 3',5'-cyclic phosphate. The interval 154-273 (RVFIMSSVEA…DLAGLTTIPY (120 aa)) is TIR-like.

It is found in the cytoplasm. It catalyses the reaction NAD(+) + H2O = ADP-D-ribose + nicotinamide + H(+). Functionally, pycsar (pyrimidine cyclase system for antiphage resistance) provides immunity against bacteriophage. The pyrimidine cyclase (PycC) synthesizes cyclic nucleotides in response to infection; these serve as specific second messenger signals. The signals activate the adjacent effector, leading to bacterial cell death and abortive phage infection. A clade B Pycsar system. Its function is as follows. The effector gene of a two-gene Pycsar system. Expression of this and adjacent uridylate cyclase XpPycC (AC P0DV28) confers resistance to bacteriophage T7. When cells expressing the Pycsar system are infected by phage T7 at low multiplicity of infection (0.2 MOI) the culture survivey, at 2.0 MOI bacteria enter growth arrest. The same cells enter growth arrest after exposure to 2.5 mM cUMP but not cCMP; the effector protein responds only to the cUMP usually produced by its cognate NTP cyclase. NAD(+) levels in infected cells are depleted between 5 and 10 minutes after infection with T7 at MOI of 2. Probably only responds to cUMP. This chain is Pycsar effector protein XpPycTIR, found in Xanthomonas perforans.